We begin with the raw amino-acid sequence, 464 residues long: Probable 1,4-beta-D-glucan cellobiohydrolase C (464 aa).

A signal peptide spans Met1–Ala19. Residues Gln20–Leu55 form the CBM1 domain. Disulfide bonds link Cys27/Cys44 and Cys38/Cys54. The interval Thr59 to Thr102 is thr-rich linker. A compositionally biased stretch (low complexity) spans Ser65–Thr100. Positions Ser65 to Asn108 are disordered. Residues Gly103–Phe464 are catalytic. Residue Asp194 is part of the active site. 2 disulfide bridges follow: Cys195–Cys254 and Cys386–Cys433. Asp240 functions as the Proton donor in the catalytic mechanism. Residue Asp419 is the Nucleophile of the active site.

Belongs to the glycosyl hydrolase 6 (cellulase B) family.

Its subcellular location is the secreted. The enzyme catalyses Hydrolysis of (1-&gt;4)-beta-D-glucosidic linkages in cellulose and cellotetraose, releasing cellobiose from the non-reducing ends of the chains.. Its function is as follows. The biological conversion of cellulose to glucose generally requires three types of hydrolytic enzymes: (1) Endoglucanases which cut internal beta-1,4-glucosidic bonds; (2) Exocellobiohydrolases that cut the disaccharide cellobiose from the non-reducing end of the cellulose polymer chain; (3) Beta-1,4-glucosidases which hydrolyze the cellobiose and other short cello-oligosaccharides to glucose. The polypeptide is Probable 1,4-beta-D-glucan cellobiohydrolase C (cbhC) (Aspergillus clavatus (strain ATCC 1007 / CBS 513.65 / DSM 816 / NCTC 3887 / NRRL 1 / QM 1276 / 107)).